The following is a 232-amino-acid chain: Ribonuclease 3 (232 aa).

The 123-residue stretch at 9-131 folds into the RNase III domain; the sequence is INLLQKKLGY…IIGGIFLDSN (123 aa). Glu44 contributes to the Mg(2+) binding site. The active site involves Asp48. Residues Asp117 and Glu120 each contribute to the Mg(2+) site. The active site involves Glu120. Residues 158 to 228 enclose the DRBM domain; it reads DPKTRLQEYL…AENALKFLIE (71 aa).

Belongs to the ribonuclease III family. Homodimer. Requires Mg(2+) as cofactor.

It is found in the cytoplasm. It carries out the reaction Endonucleolytic cleavage to 5'-phosphomonoester.. Digests double-stranded RNA. Involved in the processing of primary rRNA transcript to yield the immediate precursors to the large and small rRNAs (23S and 16S). Processes some mRNAs, and tRNAs when they are encoded in the rRNA operon. Processes pre-crRNA and tracrRNA of type II CRISPR loci if present in the organism. This chain is Ribonuclease 3, found in Blochmanniella floridana.